The primary structure comprises 177 residues: Acireductone dioxygenase (177 aa).

Positions 1–23 (MVRAWYMDDSDADQRAPHMTDPP) are disordered. Residues His86, His88, Glu92, and His131 each coordinate Fe(2+). Ni(2+)-binding residues include His86, His88, Glu92, and His131.

The protein belongs to the acireductone dioxygenase (ARD) family. Requires Fe(2+) as cofactor. Ni(2+) is required as a cofactor.

It is found in the cytoplasm. The protein resides in the nucleus. It carries out the reaction 1,2-dihydroxy-5-(methylsulfanyl)pent-1-en-3-one + O2 = 4-methylsulfanyl-2-oxobutanoate + formate + 2 H(+). The catalysed reaction is 1,2-dihydroxy-5-(methylsulfanyl)pent-1-en-3-one + O2 = 3-(methylsulfanyl)propanoate + CO + formate + 2 H(+). It participates in amino-acid biosynthesis; L-methionine biosynthesis via salvage pathway; L-methionine from S-methyl-5-thio-alpha-D-ribose 1-phosphate: step 5/6. Functionally, catalyzes 2 different reactions between oxygen and the acireductone 1,2-dihydroxy-3-keto-5-methylthiopentene (DHK-MTPene) depending upon the metal bound in the active site. Fe-containing acireductone dioxygenase (Fe-ARD) produces formate and 2-keto-4-methylthiobutyrate (KMTB), the alpha-ketoacid precursor of methionine in the methionine recycle pathway. Ni-containing acireductone dioxygenase (Ni-ARD) produces methylthiopropionate, carbon monoxide and formate, and does not lie on the methionine recycle pathway. The protein is Acireductone dioxygenase of Branchiostoma floridae (Florida lancelet).